Here is a 76-residue protein sequence, read N- to C-terminus: Kappa-actitoxin-Avd4g (76 aa).

A signal peptide spans Met1–Ala19. Positions Ala20–Phe31 are excised as a propeptide. Intrachain disulfides connect Cys37-Cys72, Cys39-Cys65, and Cys55-Cys73.

Belongs to the sea anemone type 3 (BDS) potassium channel toxin family. In terms of tissue distribution, moderately expressed in the ectodermal tissue from the distal and proximal tentacles, body wall, and oral disk.

Its subcellular location is the secreted. It localises to the nematocyst. Functionally, blocks Kv3 voltage-gated potassium channels. Reduces blood pressure. The protein is Kappa-actitoxin-Avd4g of Anemonia viridis (Snakelocks anemone).